The chain runs to 419 residues: Arginine biosynthesis bifunctional protein ArgJ 1, mitochondrial (419 aa).

Substrate-binding residues include Lys177, Thr188, Glu275, Asn414, and Thr419. Thr188 (nucleophile) is an active-site residue.

Belongs to the ArgJ family. In terms of assembly, heterodimer of an alpha and a beta chain. Post-translationally, the alpha and beta chains are autoproteolytically processed from a single precursor protein within the mitochondrion.

It localises to the mitochondrion matrix. The catalysed reaction is N(2)-acetyl-L-ornithine + L-glutamate = N-acetyl-L-glutamate + L-ornithine. It catalyses the reaction L-glutamate + acetyl-CoA = N-acetyl-L-glutamate + CoA + H(+). Its pathway is amino-acid biosynthesis; L-arginine biosynthesis; L-ornithine and N-acetyl-L-glutamate from L-glutamate and N(2)-acetyl-L-ornithine (cyclic): step 1/1. The protein operates within amino-acid biosynthesis; L-arginine biosynthesis; N(2)-acetyl-L-ornithine from L-glutamate: step 1/4. Catalyzes two activities which are involved in the cyclic version of arginine biosynthesis: the synthesis of acetylglutamate from glutamate and acetyl-CoA, and of ornithine by transacetylation between acetylornithine and glutamate. The protein is Arginine biosynthesis bifunctional protein ArgJ 1, mitochondrial of Sclerotinia sclerotiorum (strain ATCC 18683 / 1980 / Ss-1) (White mold).